Reading from the N-terminus, the 327-residue chain is Complex I intermediate-associated protein 30, mitochondrial (327 aa).

Residues 1-24 (MALVHKLLRGTYFLRKFSKPTSAL) constitute a mitochondrion transit peptide. A disordered region spans residues 42–63 (PVASPGKASSQRKTEGDLQGDH). Residues 53–63 (RKTEGDLQGDH) show a composition bias toward basic and acidic residues. Position 318 is a phosphoserine (Ser318).

The protein belongs to the CIA30 family. In terms of assembly, part of the mitochondrial complex I assembly/MCIA complex that comprises at least the core subunits TMEM126B, NDUFAF1, ECSIT and ACAD9 and complement subunits such as COA1 and TMEM186. Interacts with ECSIT. Interacts with ACAD9. At early stages of complex I assembly, it is found in intermediate subcomplexes that contain different subunits including NDUFB6, NDUFA6, NDUFA9, NDUFS3, NDUFS7, ND1, ND2 and ND3. Interacts with TMEM70 and TMEM242. As to expression, ubiquitous.

Its subcellular location is the mitochondrion. The protein resides in the mitochondrion matrix. Functionally, as part of the MCIA complex, involved in the assembly of the mitochondrial complex I. The polypeptide is Complex I intermediate-associated protein 30, mitochondrial (Homo sapiens (Human)).